A 623-amino-acid chain; its full sequence is Kelch-like protein diablo (623 aa).

The segment at M1–H54 is disordered. A Phosphothreonine modification is found at T19. The span at G20–S32 shows a compositional bias: gly residues. The 68-residue stretch at C72 to E139 folds into the BTB domain. A BACK domain is found at C174–G276. 6 Kelch repeats span residues V323–D369, L371–G417, F418–G464, L466–N511, I513–G558, and Q559–A605.

Its pathway is protein modification; protein ubiquitination. Probable substrate-specific adapter of an E3 ubiquitin-protein ligase complex which mediates the ubiquitination and subsequent proteasomal degradation of target proteins. May have a role in synapse differentiation and growth. The polypeptide is Kelch-like protein diablo (Drosophila melanogaster (Fruit fly)).